The primary structure comprises 294 residues: MDHLSVKSFAKINLGLLITGKRKDGYHTLETIFAPINWYDTIGFSDSDVISMSCSNIDLPVDDNNLCIRAARALQQSASCSKGAAMNLQKVVPFGAGLGGGSSDAATVLRVLNELWKINVSSAELHELAVKLGADVPYFLEMKGLAFARGIGDELEDLGLTLPFHVVTVFPEEHISTVWAYKNFYQKFDRPVPDLRLLLQRLCLDGDRSVLGAFENDFEPAVFDHYPKVRVVKESLLDAGSFYASLSGSGSAVFGLFDTLENAAGAVCAMQQKGYRVTLTPPGFSMEAQAGSRL.

K11 is an active-site residue. 93–103 (PFGAGLGGGSS) provides a ligand contact to ATP. The active site involves D135.

The protein belongs to the GHMP kinase family. IspE subfamily.

The enzyme catalyses 4-CDP-2-C-methyl-D-erythritol + ATP = 4-CDP-2-C-methyl-D-erythritol 2-phosphate + ADP + H(+). It functions in the pathway isoprenoid biosynthesis; isopentenyl diphosphate biosynthesis via DXP pathway; isopentenyl diphosphate from 1-deoxy-D-xylulose 5-phosphate: step 3/6. In terms of biological role, catalyzes the phosphorylation of the position 2 hydroxy group of 4-diphosphocytidyl-2C-methyl-D-erythritol. The polypeptide is 4-diphosphocytidyl-2-C-methyl-D-erythritol kinase (Chlorobium phaeobacteroides (strain DSM 266 / SMG 266 / 2430)).